A 141-amino-acid polypeptide reads, in one-letter code: Auxin-responsive protein SAUR64 (141 aa).

It belongs to the ARG7 family.

The protein localises to the cell membrane. May promote auxin-stimulated organ elongation, such as hypocotyls, stamen filaments and petals. The chain is Auxin-responsive protein SAUR64 from Arabidopsis thaliana (Mouse-ear cress).